An 89-amino-acid polypeptide reads, in one-letter code: Long neurotoxin 1 (89 aa).

Residues 1 to 21 (MKTLLLTLVVVTIVCLDLGDS) form the signal peptide. 4 cysteine pairs are disulfide-bonded: Cys24–Cys41, Cys34–Cys58, Cys62–Cys74, and Cys75–Cys80.

The protein belongs to the three-finger toxin family. Long-chain subfamily. Type II alpha-neurotoxin sub-subfamily. Expressed by the venom gland.

Its subcellular location is the secreted. Binds with high affinity to muscular (alpha-1/CHRNA1) and neuronal (alpha-7/CHRNA7) nicotinic acetylcholine receptor (nAChR) and inhibits acetylcholine from binding to the receptor, thereby impairing neuromuscular and neuronal transmission. The chain is Long neurotoxin 1 from Pseudonaja textilis (Eastern brown snake).